Reading from the N-terminus, the 269-residue chain is MPELPEVETSRRGIEPHLVGETILHAVVRNGRLRWPVSDEIHALSDKPILSVQRRAKYLLLELPDGWIIIHLGMSGSLRILPEERPAEKHDHVDLVMSNGKVLRYTDPRRFGAWLWTRELEGHNVLAHLGPEPLSDAFNGAYLREKCAKKKVAIKPWLMDNKLVVGVGNIYASESLFAAGIHPDRLASSLSEKECELLAQAIKAVLLRSIEQGGTTLRDFLQSDGKPGYFAQELQVYGREGEPCRVCGTPILAGKHAQRRTYWCRRCQK.

Residue P2 is the Schiff-base intermediate with DNA of the active site. E3 acts as the Proton donor in catalysis. The active-site Proton donor; for beta-elimination activity is the K57. The DNA site is built by H90, R109, and K150. The segment at 235–269 adopts an FPG-type zinc-finger fold; it reads QVYGREGEPCRVCGTPILAGKHAQRRTYWCRRCQK. R259 serves as the catalytic Proton donor; for delta-elimination activity.

Belongs to the FPG family. Monomer. Requires Zn(2+) as cofactor.

It catalyses the reaction Hydrolysis of DNA containing ring-opened 7-methylguanine residues, releasing 2,6-diamino-4-hydroxy-5-(N-methyl)formamidopyrimidine.. The enzyme catalyses 2'-deoxyribonucleotide-(2'-deoxyribose 5'-phosphate)-2'-deoxyribonucleotide-DNA = a 3'-end 2'-deoxyribonucleotide-(2,3-dehydro-2,3-deoxyribose 5'-phosphate)-DNA + a 5'-end 5'-phospho-2'-deoxyribonucleoside-DNA + H(+). Involved in base excision repair of DNA damaged by oxidation or by mutagenic agents. Acts as a DNA glycosylase that recognizes and removes damaged bases. Has a preference for oxidized purines, such as 7,8-dihydro-8-oxoguanine (8-oxoG). Has AP (apurinic/apyrimidinic) lyase activity and introduces nicks in the DNA strand. Cleaves the DNA backbone by beta-delta elimination to generate a single-strand break at the site of the removed base with both 3'- and 5'-phosphates. The polypeptide is Formamidopyrimidine-DNA glycosylase (Cronobacter sakazakii (strain ATCC BAA-894) (Enterobacter sakazakii)).